We begin with the raw amino-acid sequence, 382 residues long: UDP-4-amino-4-deoxy-L-arabinose--oxoglutarate aminotransferase (382 aa).

Lys183 carries the N6-(pyridoxal phosphate)lysine modification.

This sequence belongs to the DegT/DnrJ/EryC1 family. ArnB subfamily. As to quaternary structure, homodimer. Pyridoxal 5'-phosphate is required as a cofactor.

The enzyme catalyses UDP-4-amino-4-deoxy-beta-L-arabinose + 2-oxoglutarate = UDP-beta-L-threo-pentopyranos-4-ulose + L-glutamate. Its pathway is nucleotide-sugar biosynthesis; UDP-4-deoxy-4-formamido-beta-L-arabinose biosynthesis; UDP-4-deoxy-4-formamido-beta-L-arabinose from UDP-alpha-D-glucuronate: step 2/3. The protein operates within bacterial outer membrane biogenesis; lipopolysaccharide biosynthesis. Its function is as follows. Catalyzes the conversion of UDP-4-keto-arabinose (UDP-Ara4O) to UDP-4-amino-4-deoxy-L-arabinose (UDP-L-Ara4N). The modified arabinose is attached to lipid A and is required for resistance to polymyxin and cationic antimicrobial peptides. The chain is UDP-4-amino-4-deoxy-L-arabinose--oxoglutarate aminotransferase from Pseudomonas syringae pv. syringae (strain B728a).